Here is a 377-residue protein sequence, read N- to C-terminus: GTPase Obg (377 aa).

One can recognise an Obg domain in the interval M1–L159. Residues N127–E148 are disordered. The 177-residue stretch at A160–D336 folds into the OBG-type G domain. GTP-binding positions include G166–S173, F191–H195, D213–G216, N288–D291, and S317–L319. Positions 173 and 193 each coordinate Mg(2+). The interval K339–E377 is disordered.

The protein belongs to the TRAFAC class OBG-HflX-like GTPase superfamily. OBG GTPase family. Monomer. Mg(2+) serves as cofactor.

The protein localises to the cytoplasm. Functionally, an essential GTPase which binds GTP, GDP and possibly (p)ppGpp with moderate affinity, with high nucleotide exchange rates and a fairly low GTP hydrolysis rate. Plays a role in control of the cell cycle, stress response, ribosome biogenesis and in those bacteria that undergo differentiation, in morphogenesis control. The chain is GTPase Obg from Bordetella bronchiseptica (strain ATCC BAA-588 / NCTC 13252 / RB50) (Alcaligenes bronchisepticus).